Consider the following 381-residue polypeptide: Short-chain dehydrogenase anuD (381 aa).

NADP(+)-binding residues include Ile84, Lys109, Asp133, Asn158, Tyr244, and Lys248. Tyr244 functions as the Proton acceptor in the catalytic mechanism. The active-site Proton donor is the Tyr244. The active-site Lowers pKa of active site Tyr is the Lys248.

Belongs to the short-chain dehydrogenases/reductases (SDR) family.

Functionally, highly reducing polyketide synthase; part of the gene cluster that mediates the biosynthesis of annullatin D, an alkylated aromatic polyketide with a fused dihydrobenzofuran lactone ring system that exhibits potent agonistic activities toward the cannabinoid receptors. AnuD does not seem to play a role within the pathway. The annullatin backbone 2-hydroxymethyl-3-pentylphenol is assembled from one acetyl-CoA starter unit and 5 malonyl-CoA elongation units by cooperation of the highly reducing polyketide synthase anuA, the short-chain dehydrogenase anuB and the oxidoreductase anuC, before being hydroxylated at the C-5 alkyl chain by the cytochrome P450 monooxygenase anuE to form (8S)-annullatin E. The prenyltransferase anuH subsequently installs one isoprenyl group at the benzene ring to form (8S)-annullatin J. Enzymatic or nonenzymatic dihydro-benzofuran ring formation between the prenyl and the phenolic hydroxyl groups in (8S)-annullatin J results in two diastereomers (2S,9S)-annullatin H and compound 12. The intermediate (2S,9S)-annullatin H is then converted to (2S,9S)-annullatin D by the FAD-linked oxidoreductase anuG-catalyzed five-member lactone ring formation. The isomer 12 acts as a substrate for the short-chain dehydrogenase anuF and is oxidized to (2R)-annullatin F, which is subsequently acetylated by an acetyltransferase leading to (2R)-annullatin G formation. The remaining enzymes identified within the cluster, anuD, anuI and anuJ, seem not to be involved in annullatin biosynthesis. This Penicillium roqueforti (strain FM164) protein is Short-chain dehydrogenase anuD.